Here is a 406-residue protein sequence, read N- to C-terminus: Tryptophan synthase beta chain (406 aa).

Position 99 is an N6-(pyridoxal phosphate)lysine (Lys-99).

This sequence belongs to the TrpB family. In terms of assembly, tetramer of two alpha and two beta chains. It depends on pyridoxal 5'-phosphate as a cofactor.

It catalyses the reaction (1S,2R)-1-C-(indol-3-yl)glycerol 3-phosphate + L-serine = D-glyceraldehyde 3-phosphate + L-tryptophan + H2O. It participates in amino-acid biosynthesis; L-tryptophan biosynthesis; L-tryptophan from chorismate: step 5/5. Its function is as follows. The beta subunit is responsible for the synthesis of L-tryptophan from indole and L-serine. The chain is Tryptophan synthase beta chain from Allorhizobium ampelinum (strain ATCC BAA-846 / DSM 112012 / S4) (Agrobacterium vitis (strain S4)).